A 30-amino-acid chain; its full sequence is V-type proton ATPase catalytic subunit A isoform 2 (30 aa).

The protein belongs to the ATPase alpha/beta chains family. As to quaternary structure, V-ATPase is a heteromultimeric enzyme composed of a peripheral catalytic V1 complex (main components: subunits A, B, C, D, E, and F) attached to an integral membrane V0 proton pore complex (main component: the proteolipid protein).

The enzyme catalyses ATP + H2O + 4 H(+)(in) = ADP + phosphate + 5 H(+)(out). Catalytic subunit of the peripheral V1 complex of vacuolar ATPase. V-ATPase vacuolar ATPase is responsible for acidifying a variety of intracellular compartments in eukaryotic cells. The chain is V-type proton ATPase catalytic subunit A isoform 2 from Equisetum arvense (Field horsetail).